Reading from the N-terminus, the 1055-residue chain is Elongation factor 3 (1055 aa).

Val45 provides a ligand contact to ADP. HEAT repeat units lie at residues 48–86 (FTQI…NGAA), 96–133 (SAEN…SMNP), 134–172 (WASF…SAPF), 176–213 (EAMP…LVEN), 218–255 (KFVP…APTI), 257–290 (LIAP…LVDS), and 296–337 (PFLP…VPAE). ABC transporter domains lie at 447–659 (CNIE…SYYQ) and 687–1004 (LKMR…KKAA). ADP-binding residues include Asn723, Glu933, Asn936, and His962. The segment at 1024 to 1055 (EKKLSAADKRKAKKDRMARRKRGEEVFSDEEL) is disordered. The segment covering 1033–1044 (RKAKKDRMARRK) has biased composition (basic residues).

Belongs to the ABC transporter superfamily. ABCF family. EF3 subfamily. In terms of assembly, interacts with CCH1; the interaction is direct and required for the localization of CCH1 to the cell membrane.

Its subcellular location is the cytoplasm. It is found in the cytosol. It catalyses the reaction ATP + H2O = ADP + phosphate + H(+). The protein operates within protein biosynthesis; polypeptide chain elongation. In terms of biological role, ribosome-dependent ATPase that functions in cytoplasmic translation elongation. Required for the ATP-dependent release of deacylated tRNA from the ribosomal E-site during protein biosynthesis. Stimulates the eEF1A-dependent binding of aminoacyl-tRNA to the ribosomal A-site, which has reduced affinity for tRNA as long as the E-site is occupied. Assists translation termination by stimulating the release of nascent protein from the ribosome by release factors. Appears to localize calcium-channel protein CCH1 to the plasma membrane. The sequence is that of Elongation factor 3 from Cryptococcus neoformans var. grubii serotype A (strain H99 / ATCC 208821 / CBS 10515 / FGSC 9487) (Filobasidiella neoformans var. grubii).